The sequence spans 470 residues: Argininosuccinate lyase (470 aa).

This sequence belongs to the lyase 1 family. Argininosuccinate lyase subfamily.

It localises to the cytoplasm. It carries out the reaction 2-(N(omega)-L-arginino)succinate = fumarate + L-arginine. It functions in the pathway amino-acid biosynthesis; L-arginine biosynthesis; L-arginine from L-ornithine and carbamoyl phosphate: step 3/3. The chain is Argininosuccinate lyase from Mycobacterium leprae (strain Br4923).